Consider the following 364-residue polypeptide: Putative agmatine deiminase (364 aa).

Cys355 (amidino-cysteine intermediate) is an active-site residue.

Belongs to the agmatine deiminase family.

The catalysed reaction is agmatine + H2O = N-carbamoylputrescine + NH4(+). This chain is Putative agmatine deiminase, found in Mycoplasma capricolum subsp. capricolum (strain California kid / ATCC 27343 / NCTC 10154).